The primary structure comprises 932 residues: Alanine--tRNA ligase, mitochondrial (932 aa).

The tract at residues 458-480 (SRLTWNTSSSSSDQTTQQTTQLP) is disordered. A compositionally biased stretch (low complexity) spans 464 to 478 (TSSSSSDQTTQQTTQ). Zn(2+) contacts are provided by His-610, His-614, Cys-713, and His-717.

This sequence belongs to the class-II aminoacyl-tRNA synthetase family. Monomer. Zn(2+) serves as cofactor.

The protein localises to the mitochondrion. The enzyme catalyses tRNA(Ala) + L-alanine + ATP = L-alanyl-tRNA(Ala) + AMP + diphosphate. Catalyzes the attachment of alanine to tRNA(Ala) in a two-step reaction: alanine is first activated by ATP to form Ala-AMP and then transferred to the acceptor end of tRNA(Ala). Also edits incorrectly charged tRNA(Ala) via its editing domain. The polypeptide is Alanine--tRNA ligase, mitochondrial (malaS) (Dictyostelium discoideum (Social amoeba)).